The sequence spans 326 residues: 4-hydroxy-3-methylbut-2-enyl diphosphate reductase (326 aa).

Residue C22 coordinates [4Fe-4S] cluster. H51 and H84 together coordinate (2E)-4-hydroxy-3-methylbut-2-enyl diphosphate. Residues H51 and H84 each coordinate dimethylallyl diphosphate. Residues H51 and H84 each coordinate isopentenyl diphosphate. C106 is a [4Fe-4S] cluster binding site. Residue H134 participates in (2E)-4-hydroxy-3-methylbut-2-enyl diphosphate binding. H134 contacts dimethylallyl diphosphate. H134 lines the isopentenyl diphosphate pocket. E136 (proton donor) is an active-site residue. Residue T174 participates in (2E)-4-hydroxy-3-methylbut-2-enyl diphosphate binding. Residue C204 coordinates [4Fe-4S] cluster. Residues S232, S233, N234, and S276 each coordinate (2E)-4-hydroxy-3-methylbut-2-enyl diphosphate. Dimethylallyl diphosphate-binding residues include S232, S233, N234, and S276. 4 residues coordinate isopentenyl diphosphate: S232, S233, N234, and S276.

Belongs to the IspH family. It depends on [4Fe-4S] cluster as a cofactor.

It catalyses the reaction isopentenyl diphosphate + 2 oxidized [2Fe-2S]-[ferredoxin] + H2O = (2E)-4-hydroxy-3-methylbut-2-enyl diphosphate + 2 reduced [2Fe-2S]-[ferredoxin] + 2 H(+). It carries out the reaction dimethylallyl diphosphate + 2 oxidized [2Fe-2S]-[ferredoxin] + H2O = (2E)-4-hydroxy-3-methylbut-2-enyl diphosphate + 2 reduced [2Fe-2S]-[ferredoxin] + 2 H(+). Its pathway is isoprenoid biosynthesis; dimethylallyl diphosphate biosynthesis; dimethylallyl diphosphate from (2E)-4-hydroxy-3-methylbutenyl diphosphate: step 1/1. The protein operates within isoprenoid biosynthesis; isopentenyl diphosphate biosynthesis via DXP pathway; isopentenyl diphosphate from 1-deoxy-D-xylulose 5-phosphate: step 6/6. Catalyzes the conversion of 1-hydroxy-2-methyl-2-(E)-butenyl 4-diphosphate (HMBPP) into a mixture of isopentenyl diphosphate (IPP) and dimethylallyl diphosphate (DMAPP). Acts in the terminal step of the DOXP/MEP pathway for isoprenoid precursor biosynthesis. This chain is 4-hydroxy-3-methylbut-2-enyl diphosphate reductase, found in Bordetella parapertussis (strain 12822 / ATCC BAA-587 / NCTC 13253).